A 79-amino-acid chain; its full sequence is Putative antitoxin VapB12 (79 aa).

Belongs to the UPF0330 family.

Possibly the antitoxin component of a type II toxin-antitoxin (TA) system. Its cognate toxin is VapC12 (Potential). The polypeptide is Putative antitoxin VapB12 (vapB12) (Sulfurisphaera tokodaii (strain DSM 16993 / JCM 10545 / NBRC 100140 / 7) (Sulfolobus tokodaii)).